The chain runs to 355 residues: Ornithine transcarbamylase, mitochondrial (355 aa).

The N-terminal 35 residues, 1-35, are a transit peptide targeting the mitochondrion; it reads MLFINLRTLLNNAALRNGHNFVVRNFRCGQPVQDK. Residue Lys71 is modified to N6-acetyllysine; alternate. An N6-succinyllysine; alternate modification is found at Lys71. At Lys81 the chain carries N6-succinyllysine. Lys89 is modified (N6-acetyllysine; alternate). An N6-succinyllysine; alternate modification is found at Lys89. 91-95 is a carbamoyl phosphate binding site; sequence STRTR. Ser134 is subject to Phosphoserine. A carbamoyl phosphate-binding site is contributed by Arg142. Arg142 contacts L-ornithine. Lys145 bears the N6-acetyllysine; alternate mark. Residue Lys145 is modified to N6-succinyllysine; alternate. His169 lines the carbamoyl phosphate pocket. Asn200 serves as a coordination point for L-ornithine. N6-acetyllysine; alternate is present on residues Lys222, Lys232, and Lys239. N6-succinyllysine; alternate is present on residues Lys222, Lys232, and Lys239. Position 244 is an N6-acetyllysine (Lys244). 264–268 contributes to the L-ornithine binding site; the sequence is DTWIS. N6-succinyllysine is present on residues Lys275 and Lys290. Lys293 carries the N6-acetyllysine; alternate modification. At Lys293 the chain carries N6-succinyllysine; alternate. Residue 303 to 306 coordinates L-ornithine; that stretch reads HCLP. Cys304 is an active-site residue. The residue at position 308 (Lys308) is an N6-acetyllysine; alternate. An N6-succinyllysine; alternate modification is found at Lys308. Carbamoyl phosphate is bound at residue Arg331. An L-ornithine-binding site is contributed by Arg331.

This sequence belongs to the aspartate/ornithine carbamoyltransferase superfamily. OTCase family. As to quaternary structure, homotrimer. In terms of processing, acetylation at Lys-89 negatively regulates ornithine carbamoyltransferase activity in response to nutrient signals.

The protein resides in the mitochondrion matrix. The enzyme catalyses carbamoyl phosphate + L-ornithine = L-citrulline + phosphate + H(+). It functions in the pathway nitrogen metabolism; urea cycle; L-citrulline from L-ornithine and carbamoyl phosphate: step 1/1. With respect to regulation, negatively regulated by lysine acetylation. In terms of biological role, catalyzes the second step of the urea cycle, the condensation of carbamoyl phosphate with L-ornithine to form L-citrulline. The urea cycle ensures the detoxification of ammonia by converting it to urea for excretion. In Ovis aries (Sheep), this protein is Ornithine transcarbamylase, mitochondrial.